The primary structure comprises 124 residues: Small ribosomal subunit protein uS13 (124 aa).

Residues 97–124 (PVRGQRTKTNARTRKGPKRTIAGKKKAR) form a disordered region.

It belongs to the universal ribosomal protein uS13 family. As to quaternary structure, part of the 30S ribosomal subunit. Forms a loose heterodimer with protein S19. Forms two bridges to the 50S subunit in the 70S ribosome.

Located at the top of the head of the 30S subunit, it contacts several helices of the 16S rRNA. In the 70S ribosome it contacts the 23S rRNA (bridge B1a) and protein L5 of the 50S subunit (bridge B1b), connecting the 2 subunits; these bridges are implicated in subunit movement. Contacts the tRNAs in the A and P-sites. In Mycolicibacterium gilvum (strain PYR-GCK) (Mycobacterium gilvum (strain PYR-GCK)), this protein is Small ribosomal subunit protein uS13.